The primary structure comprises 364 residues: Aminomethyltransferase (364 aa).

It belongs to the GcvT family. In terms of assembly, the glycine cleavage system is composed of four proteins: P, T, L and H.

The catalysed reaction is N(6)-[(R)-S(8)-aminomethyldihydrolipoyl]-L-lysyl-[protein] + (6S)-5,6,7,8-tetrahydrofolate = N(6)-[(R)-dihydrolipoyl]-L-lysyl-[protein] + (6R)-5,10-methylene-5,6,7,8-tetrahydrofolate + NH4(+). The glycine cleavage system catalyzes the degradation of glycine. The chain is Aminomethyltransferase from Salmonella paratyphi C (strain RKS4594).